Consider the following 479-residue polypeptide: Ribulose bisphosphate carboxylase large chain (479 aa).

The propeptide occupies 1-2 (MS). Substrate is bound by residues Asn-123 and Thr-173. Residue Lys-175 is the Proton acceptor of the active site. A substrate-binding site is contributed by Lys-177. Residues Lys-201, Asp-203, and Glu-204 each contribute to the Mg(2+) site. The residue at position 201 (Lys-201) is an N6-carboxylysine. Position 208 is a phosphoserine (Ser-208). His-294 (proton acceptor) is an active-site residue. Substrate is bound by residues Arg-295 and His-327. Thr-330 bears the Phosphothreonine mark. Substrate is bound at residue Ser-379.

The protein belongs to the RuBisCO large chain family. Type I subfamily. In terms of assembly, heterohexadecamer of 8 large chains and 8 small chains; disulfide-linked. The disulfide link is formed within the large subunit homodimers. The cofactor is Mg(2+). In terms of processing, the disulfide bond which can form in the large chain dimeric partners within the hexadecamer appears to be associated with oxidative stress and protein turnover.

The protein localises to the plastid. The protein resides in the chloroplast. The enzyme catalyses 2 (2R)-3-phosphoglycerate + 2 H(+) = D-ribulose 1,5-bisphosphate + CO2 + H2O. The catalysed reaction is D-ribulose 1,5-bisphosphate + O2 = 2-phosphoglycolate + (2R)-3-phosphoglycerate + 2 H(+). In terms of biological role, ruBisCO catalyzes two reactions: the carboxylation of D-ribulose 1,5-bisphosphate, the primary event in carbon dioxide fixation, as well as the oxidative fragmentation of the pentose substrate in the photorespiration process. Both reactions occur simultaneously and in competition at the same active site. In Draba nemorosa (Woodland whitlowgrass), this protein is Ribulose bisphosphate carboxylase large chain.